We begin with the raw amino-acid sequence, 272 residues long: Indole-3-glycerol phosphate synthase (272 aa).

This sequence belongs to the TrpC family.

It carries out the reaction 1-(2-carboxyphenylamino)-1-deoxy-D-ribulose 5-phosphate + H(+) = (1S,2R)-1-C-(indol-3-yl)glycerol 3-phosphate + CO2 + H2O. The protein operates within amino-acid biosynthesis; L-tryptophan biosynthesis; L-tryptophan from chorismate: step 4/5. This is Indole-3-glycerol phosphate synthase from Mycobacteroides abscessus (strain ATCC 19977 / DSM 44196 / CCUG 20993 / CIP 104536 / JCM 13569 / NCTC 13031 / TMC 1543 / L948) (Mycobacterium abscessus).